The sequence spans 427 residues: Transcobalamin-2 (427 aa).

The first 18 residues, 1–18 (MRHLGAFLFLLGVLGALT), serve as a signal peptide directing secretion. 4 disulfide bridges follow: Cys-21-Cys-267, Cys-83-Cys-96, Cys-116-Cys-309, and Cys-165-Cys-205. Cob(II)alamin contacts are provided by residues Gln-104, 152-156 (TSYYQ), His-190, 190-194 (HHSVD), Asn-242, Ser-245, Gln-291, and 395-397 (WQL).

It belongs to the eukaryotic cobalamin transport proteins family. As to quaternary structure, interacts with CD320 (via LDL-receptor class A domains).

The protein localises to the secreted. Its function is as follows. Primary vitamin B12-binding and transport protein. Delivers cobalamin to cells. The polypeptide is Transcobalamin-2 (TCN2) (Homo sapiens (Human)).